The following is a 582-amino-acid chain: Aspartate--tRNA(Asp/Asn) ligase (582 aa).

Glu177 is an L-aspartate binding site. An aspartate region spans residues 201-204; it reads QLFK. Arg223 serves as a coordination point for L-aspartate. ATP is bound by residues 223–225 and Gln232; that span reads RDE. His447 lines the L-aspartate pocket. Position 481 (Glu481) interacts with ATP. Arg488 is a binding site for L-aspartate. 533–536 serves as a coordination point for ATP; the sequence is GLDR.

Belongs to the class-II aminoacyl-tRNA synthetase family. Type 1 subfamily. Homodimer.

The protein localises to the cytoplasm. It catalyses the reaction tRNA(Asx) + L-aspartate + ATP = L-aspartyl-tRNA(Asx) + AMP + diphosphate. Functionally, aspartyl-tRNA synthetase with relaxed tRNA specificity since it is able to aspartylate not only its cognate tRNA(Asp) but also tRNA(Asn). Reaction proceeds in two steps: L-aspartate is first activated by ATP to form Asp-AMP and then transferred to the acceptor end of tRNA(Asp/Asn). The sequence is that of Aspartate--tRNA(Asp/Asn) ligase from Chlamydia trachomatis serovar L2 (strain ATCC VR-902B / DSM 19102 / 434/Bu).